Consider the following 156-residue polypeptide: 6,7-dimethyl-8-ribityllumazine synthase (156 aa).

Residues Trp28, 60–62 (SFE), and 82–84 (VVV) contribute to the 5-amino-6-(D-ribitylamino)uracil site. Residue 87–88 (GT) coordinates (2S)-2-hydroxy-3-oxobutyl phosphate. His90 acts as the Proton donor in catalysis. Phe115 lines the 5-amino-6-(D-ribitylamino)uracil pocket. Arg129 serves as a coordination point for (2S)-2-hydroxy-3-oxobutyl phosphate.

This sequence belongs to the DMRL synthase family.

It carries out the reaction (2S)-2-hydroxy-3-oxobutyl phosphate + 5-amino-6-(D-ribitylamino)uracil = 6,7-dimethyl-8-(1-D-ribityl)lumazine + phosphate + 2 H2O + H(+). It participates in cofactor biosynthesis; riboflavin biosynthesis; riboflavin from 2-hydroxy-3-oxobutyl phosphate and 5-amino-6-(D-ribitylamino)uracil: step 1/2. Functionally, catalyzes the formation of 6,7-dimethyl-8-ribityllumazine by condensation of 5-amino-6-(D-ribitylamino)uracil with 3,4-dihydroxy-2-butanone 4-phosphate. This is the penultimate step in the biosynthesis of riboflavin. The protein is 6,7-dimethyl-8-ribityllumazine synthase of Kocuria rhizophila (strain ATCC 9341 / DSM 348 / NBRC 103217 / DC2201).